Reading from the N-terminus, the 154-residue chain is Xanthine-guanine phosphoribosyltransferase (154 aa).

Residues 37 to 38 and 90 to 98 each bind 5-phospho-alpha-D-ribose 1-diphosphate; these read RG and DDLVDTGNT. Asp-91 contributes to the Mg(2+) binding site. Guanine-binding residues include Asp-94 and Ile-137. The xanthine site is built by Asp-94 and Ile-137. GMP is bound by residues 94–98 and 136–137; these read DTGNT and WI.

It belongs to the purine/pyrimidine phosphoribosyltransferase family. XGPT subfamily. As to quaternary structure, homotetramer. Mg(2+) is required as a cofactor.

It is found in the cell inner membrane. The catalysed reaction is GMP + diphosphate = guanine + 5-phospho-alpha-D-ribose 1-diphosphate. It catalyses the reaction XMP + diphosphate = xanthine + 5-phospho-alpha-D-ribose 1-diphosphate. It carries out the reaction IMP + diphosphate = hypoxanthine + 5-phospho-alpha-D-ribose 1-diphosphate. The protein operates within purine metabolism; GMP biosynthesis via salvage pathway; GMP from guanine: step 1/1. Its pathway is purine metabolism; XMP biosynthesis via salvage pathway; XMP from xanthine: step 1/1. Its function is as follows. Purine salvage pathway enzyme that catalyzes the transfer of the ribosyl-5-phosphate group from 5-phospho-alpha-D-ribose 1-diphosphate (PRPP) to the N9 position of the 6-oxopurines guanine and xanthine to form the corresponding ribonucleotides GMP (guanosine 5'-monophosphate) and XMP (xanthosine 5'-monophosphate), with the release of PPi. To a lesser extent, also acts on hypoxanthine. The protein is Xanthine-guanine phosphoribosyltransferase of Histophilus somni (strain 129Pt) (Haemophilus somnus).